Consider the following 731-residue polypeptide: Catalase-peroxidase (731 aa).

The tract at residues 1–24 is disordered; the sequence is MSTEPNCPFSGNARKHTAAGAPSN. The segment at residues 96–219 is a cross-link (tryptophyl-tyrosyl-methioninium (Trp-Tyr) (with M-245)); that stretch reads WHSAGTYRVS…LGAVQMGLIY (124 aa). Histidine 97 serves as the catalytic Proton acceptor. Positions 219 to 245 form a cross-link, tryptophyl-tyrosyl-methioninium (Tyr-Met) (with W-96); the sequence is YVNPEGPNGNPDPIAAARDIRETFARM. Histidine 260 serves as a coordination point for heme b. The disordered stretch occupies residues 339–365; the sequence is GAQQWKPKGDAGAGTVPDAHDPSKRHA.

Belongs to the peroxidase family. Peroxidase/catalase subfamily. Homodimer or homotetramer. Heme b is required as a cofactor. Formation of the three residue Trp-Tyr-Met cross-link is important for the catalase, but not the peroxidase activity of the enzyme.

The catalysed reaction is H2O2 + AH2 = A + 2 H2O. It carries out the reaction 2 H2O2 = O2 + 2 H2O. Its function is as follows. Bifunctional enzyme with both catalase and broad-spectrum peroxidase activity. In Polaromonas sp. (strain JS666 / ATCC BAA-500), this protein is Catalase-peroxidase.